Consider the following 107-residue polypeptide: Sulfurtransferase Alvin_2599 (107 aa).

The 89-residue stretch at 16–104 (DTEDVLLVDI…WARHGLPIVA (89 aa)) folds into the Rhodanese domain. Cys64 (cysteine persulfide intermediate) is an active-site residue.

Monomer.

The protein resides in the cytoplasm. The protein operates within energy metabolism; sulfur metabolism. Sulfur carrier protein involved in sulfur trafficking for oxidative dissimilatory sulfur metabolism. Component of a sulfur relay system that starts with the sulfur-mobilizing rhodanese-like protein Rhd_2599 (Alvin_2599), which transfers the sulfur from a low-molecular-weight thiol, maybe glutathione, to the TusA protein (Alvin_2600); TusA serves as the sulfur donor for DsrEFH, which persulfurates DsrC; persulfurated DsrC very probably serves as a direct substrate for reverse-acting sulfite reductase, DsrAB. Is able to catalyze the sulfur transfer reaction from thiosulfate or glutathione (GSSH) to cyanide in vitro, however, thiosulfate is unlikely an in vivo substrate. In Allochromatium vinosum (strain ATCC 17899 / DSM 180 / NBRC 103801 / NCIMB 10441 / D) (Chromatium vinosum), this protein is Sulfurtransferase Alvin_2599.